The sequence spans 129 residues: Prefoldin subunit 6 (129 aa).

Alanine 2 carries the N-acetylalanine modification. An N6-acetyllysine modification is found at lysine 21. Lysine 66 bears the N6-acetyllysine; alternate mark. Residue lysine 66 forms a Glycyl lysine isopeptide (Lys-Gly) (interchain with G-Cter in SUMO1); alternate linkage. A Glycyl lysine isopeptide (Lys-Gly) (interchain with G-Cter in SUMO2); alternate cross-link involves residue lysine 66.

The protein belongs to the prefoldin subunit beta family. Heterohexamer of two PFD-alpha type and four PFD-beta type subunits. Component of the PAQosome complex which is responsible for the biogenesis of several protein complexes and which consists of R2TP complex members RUVBL1, RUVBL2, RPAP3 and PIH1D1, URI complex members PFDN2, PFDN6, PDRG1, UXT and URI1 as well as ASDURF, POLR2E and DNAAF10/WDR92.

In terms of biological role, binds specifically to cytosolic chaperonin (c-CPN) and transfers target proteins to it. Binds to nascent polypeptide chain and promotes folding in an environment in which there are many competing pathways for nonnative proteins. The polypeptide is Prefoldin subunit 6 (PFDN6) (Canis lupus familiaris (Dog)).